We begin with the raw amino-acid sequence, 397 residues long: Tryptophan synthase beta chain (397 aa).

K91 carries the post-translational modification N6-(pyridoxal phosphate)lysine.

This sequence belongs to the TrpB family. In terms of assembly, tetramer of two alpha and two beta chains. Pyridoxal 5'-phosphate serves as cofactor.

It carries out the reaction (1S,2R)-1-C-(indol-3-yl)glycerol 3-phosphate + L-serine = D-glyceraldehyde 3-phosphate + L-tryptophan + H2O. It functions in the pathway amino-acid biosynthesis; L-tryptophan biosynthesis; L-tryptophan from chorismate: step 5/5. The beta subunit is responsible for the synthesis of L-tryptophan from indole and L-serine. This is Tryptophan synthase beta chain from Bacillus cereus (strain Q1).